A 202-amino-acid chain; its full sequence is MIALATGPRYRVPFRRRREGKTNYYKRRELIKADAPRLVARKTLNHNIAQIVDFAPHGDVTLASAHSIELRNKFGWKGHCGNTPAAYLTGYLCGLRALERGIERAVIDIGLHRPVRGSRVFAMLKGALDAGMDIPHGEEVLPPEDRIRGEHIANLARQIKEEDPEEYERRFSKYLERGLKPEELPEHFEEVKSKIEEEFGGA.

It belongs to the universal ribosomal protein uL18 family. As to quaternary structure, part of the 50S ribosomal subunit. Contacts the 5S and 23S rRNAs.

In terms of biological role, this is one of the proteins that bind and probably mediate the attachment of the 5S RNA into the large ribosomal subunit, where it forms part of the central protuberance. The protein is Large ribosomal subunit protein uL18 of Methanopyrus kandleri (strain AV19 / DSM 6324 / JCM 9639 / NBRC 100938).